A 346-amino-acid polypeptide reads, in one-letter code: Nicotinate-nucleotide--dimethylbenzimidazole phosphoribosyltransferase (346 aa).

The active-site Proton acceptor is Glu-313.

It belongs to the CobT family.

It catalyses the reaction 5,6-dimethylbenzimidazole + nicotinate beta-D-ribonucleotide = alpha-ribazole 5'-phosphate + nicotinate + H(+). It participates in nucleoside biosynthesis; alpha-ribazole biosynthesis; alpha-ribazole from 5,6-dimethylbenzimidazole: step 1/2. In terms of biological role, catalyzes the synthesis of alpha-ribazole-5'-phosphate from nicotinate mononucleotide (NAMN) and 5,6-dimethylbenzimidazole (DMB). The protein is Nicotinate-nucleotide--dimethylbenzimidazole phosphoribosyltransferase of Parabacteroides distasonis (strain ATCC 8503 / DSM 20701 / CIP 104284 / JCM 5825 / NCTC 11152).